We begin with the raw amino-acid sequence, 637 residues long: MAKTIRLTTAQALVKFLNAQYLHADGKEEPFVEGIFTIFGHGNVLGIGQALEQDAGRLNVWQGKNEQGMAHAAMAFSKQMLRKKIYAVTTSVGPGAANLVAAAGTALANNIPVLLLPADTFATRQPDPVLQQFEQEYSQAVTTNDALKPVSRYWDRITRPEQLMSSLIRAFEVMTDPGKAGPATICIAQDVEGEAYEYPEEFFRKRIHYLERRKPTEREIEEALERIRRSKRPLLVVGGGAKYSEAKEELVALSEQCGIPLVETQAGKATVAADFANNLGGLGVTGTLAANKAAREADLVIGVGTRYTDFATSSKTAFDFEHTTFLNINVSRMQTYKLDAYQVVADAKETLSLLISRLKTYRSAFGDRIAALKEEWLAERNRLKSVVFNRKTFVPEVKEHFSQEKLNEYADALGTELPQTTALLAINETIDEDSTIICSSGSLPGDLQRLWHANEPNTYHLEYGYSCMGYEISGALGIKLAEPEREVYSIVGDGSFLMLHSELITAIQYNKKINILLFDNAGFGCISNLQMDHGGGSYYCEFLTADNQVMNIDYAKVAEGYGAKTYRANTVEQLKAALKDAKKQETSTLIEMKVLPKTMTDGYESWWNVGVAEVAASQSIQDAYQARQAKLKEAKHY.

E66 serves as a coordination point for thiamine diphosphate. A thiamine pyrophosphate binding region spans residues 442–522; the sequence is SLPGDLQRLW…INILLFDNAG (81 aa). The Mg(2+) site is built by D493 and N520.

Belongs to the TPP enzyme family. It depends on Mg(2+) as a cofactor. Requires thiamine diphosphate as cofactor.

It catalyses the reaction 3D-3,5/4-trihydroxycyclohexane-1,2-dione + H2O = 5-deoxy-D-glucuronate + H(+). It functions in the pathway polyol metabolism; myo-inositol degradation into acetyl-CoA; acetyl-CoA from myo-inositol: step 3/7. Functionally, involved in the cleavage of the C1-C2 bond of 3D-(3,5/4)-trihydroxycyclohexane-1,2-dione (THcHDO) to yield 5-deoxy-glucuronate (5DG). This Shouchella clausii (strain KSM-K16) (Alkalihalobacillus clausii) protein is 3D-(3,5/4)-trihydroxycyclohexane-1,2-dione hydrolase.